The sequence spans 1385 residues: DNA-directed RNA polymerase subunit beta' (1385 aa).

4 residues coordinate Zn(2+): cysteine 72, cysteine 74, cysteine 87, and cysteine 90. Mg(2+) is bound by residues aspartate 467, aspartate 469, and aspartate 471. Residues cysteine 829, cysteine 910, cysteine 917, and cysteine 920 each coordinate Zn(2+).

It belongs to the RNA polymerase beta' chain family. The RNAP catalytic core consists of 2 alpha, 1 beta, 1 beta' and 1 omega subunit. When a sigma factor is associated with the core the holoenzyme is formed, which can initiate transcription. It depends on Mg(2+) as a cofactor. The cofactor is Zn(2+).

It carries out the reaction RNA(n) + a ribonucleoside 5'-triphosphate = RNA(n+1) + diphosphate. Functionally, DNA-dependent RNA polymerase catalyzes the transcription of DNA into RNA using the four ribonucleoside triphosphates as substrates. The chain is DNA-directed RNA polymerase subunit beta' from Elusimicrobium minutum (strain Pei191).